Reading from the N-terminus, the 99-residue chain is Putative protein YgeP (99 aa).

The sequence is that of Putative protein YgeP (ygeP) from Escherichia coli (strain K12).